The sequence spans 75 residues: UPF0154 protein MYPE400 (75 aa).

Residues 5 to 27 (IGLCLGLGIPISLIIGAVIGYYF) form a helical membrane-spanning segment.

It belongs to the UPF0154 family.

The protein localises to the membrane. The polypeptide is UPF0154 protein MYPE400 (Malacoplasma penetrans (strain HF-2) (Mycoplasma penetrans)).